Consider the following 132-residue polypeptide: Small ribosomal subunit protein uS8 (132 aa).

It belongs to the universal ribosomal protein uS8 family. As to quaternary structure, part of the 30S ribosomal subunit. Contacts proteins S5 and S12.

One of the primary rRNA binding proteins, it binds directly to 16S rRNA central domain where it helps coordinate assembly of the platform of the 30S subunit. The polypeptide is Small ribosomal subunit protein uS8 (Rickettsia rickettsii (strain Sheila Smith)).